The sequence spans 324 residues: Methenyltetrahydromethanopterin cyclohydrolase (324 aa).

The protein belongs to the MCH family.

The protein resides in the cytoplasm. The enzyme catalyses 5,10-methenyl-5,6,7,8-tetrahydromethanopterin + H2O = N(5)-formyl-5,6,7,8-tetrahydromethanopterin + H(+). Its pathway is one-carbon metabolism; methanogenesis from CO(2); 5,10-methenyl-5,6,7,8-tetrahydromethanopterin from CO(2): step 3/3. Functionally, catalyzes the reversible interconversion of 5-formyl-H(4)MPT to methenyl-H(4)MPT(+). The protein is Methenyltetrahydromethanopterin cyclohydrolase of Methanococcus aeolicus (strain ATCC BAA-1280 / DSM 17508 / OCM 812 / Nankai-3).